The sequence spans 185 residues: dTTP/UTP pyrophosphatase (185 aa).

Asp-64 functions as the Proton acceptor in the catalytic mechanism.

It belongs to the Maf family. YhdE subfamily. It depends on a divalent metal cation as a cofactor.

Its subcellular location is the cytoplasm. It carries out the reaction dTTP + H2O = dTMP + diphosphate + H(+). The enzyme catalyses UTP + H2O = UMP + diphosphate + H(+). In terms of biological role, nucleoside triphosphate pyrophosphatase that hydrolyzes dTTP and UTP. May have a dual role in cell division arrest and in preventing the incorporation of modified nucleotides into cellular nucleic acids. This chain is dTTP/UTP pyrophosphatase, found in Thermococcus gammatolerans (strain DSM 15229 / JCM 11827 / EJ3).